A 133-amino-acid chain; its full sequence is Small ribosomal subunit protein uS11 (133 aa).

The protein belongs to the universal ribosomal protein uS11 family. Part of the 30S ribosomal subunit. Interacts with proteins S7 and S18. Binds to IF-3.

Located on the platform of the 30S subunit, it bridges several disparate RNA helices of the 16S rRNA. Forms part of the Shine-Dalgarno cleft in the 70S ribosome. In Shouchella clausii (strain KSM-K16) (Alkalihalobacillus clausii), this protein is Small ribosomal subunit protein uS11.